Reading from the N-terminus, the 387-residue chain is Muscleblind-like protein 1 (387 aa).

Residue Thr-6 is modified to Phosphothreonine. 4 C3H1-type zinc fingers span residues 13 to 41 (WLTLEVCREFQRGTCSRPDTECKFAHPSK), 47 to 73 (NGRVIACFDSLKGRCSRENCKYLHPPP), 178 to 206 (TDRLEVCREYQRGNCNRGENDCRFAHPAD), and 214 to 240 (DNTVTVCMDYIKGRCSREKCKYFHPPA).

Belongs to the muscleblind family. As to quaternary structure, interacts with DDX1 and YBX1. Interacts with HNRNPH1; the interaction in RNA-independent. Interacts with RBPMS; the interaction allows cooperative assembly of RNA-bound stable cell-specific alternative splicing regulatory complexes.

The protein resides in the nucleus. Its subcellular location is the cytoplasm. It localises to the cytoplasmic granule. Mediates pre-mRNA alternative splicing regulation. Acts either as activator or repressor of splicing on specific pre-mRNA targets. Inhibits cardiac troponin-T (TNNT2) pre-mRNA exon inclusion but induces insulin receptor (IR) pre-mRNA exon inclusion in muscle. Antagonizes the alternative splicing activity pattern of CELF proteins. Regulates the TNNT2 exon 5 skipping through competition with U2AF2. Inhibits the formation of the spliceosome A complex on intron 4 of TNNT2 pre-mRNA. Binds to the stem-loop structure within the polypyrimidine tract of TNNT2 intron 4 during spliceosome assembly. Binds to the 5'-YGCU(U/G)Y-3'consensus sequence. Binds to the IR RNA. Binds to expanded CUG repeat RNA, which folds into a hairpin structure containing GC base pairs and bulged, unpaired U residues. Together with RNA binding proteins RBPMS and RBFOX2, activates vascular smooth muscle cells alternative splicing events. Regulates NCOR2 alternative splicing. The sequence is that of Muscleblind-like protein 1 from Rattus norvegicus (Rat).